The primary structure comprises 201 residues: MRALLLSGCLALVLLTQQAAAQTLLVVGDSISAALGLDTSQGWVALLQKRLADEGYDYRVVNASISGDTSAGGLARLPALLAEEKPALVVIELGGNDGLRGMAPAQLQQNLASMAQKARAEGAKVLLLGIQLPPNYGPRYIEAFSRVYGAVAAQEKTALVPFFLEGVGGVQGMMQADGIHPALAAQPRLLENVWPTLKPLL.

The first 21 residues, 1-21 (MRALLLSGCLALVLLTQQAAA), serve as a signal peptide directing secretion. Catalysis depends on Ser-30, which acts as the Nucleophile. Catalysis depends on residues Asp-177 and His-180.

It belongs to the 'GDSL' lipolytic enzyme family.

The protein localises to the secreted. It carries out the reaction a carboxylic ester + H2O = an alcohol + a carboxylate + H(+). In terms of biological role, esterase that exhibits the highest activity towards Tween detergents and p-nitrophenyl esters of short acyl chain length. Also displays a low thioesterase activity towards palmitoyl-coenzyme A, but is not active towards acetyl-coenzyme A. In Pseudomonas aeruginosa (strain ATCC 15692 / DSM 22644 / CIP 104116 / JCM 14847 / LMG 12228 / 1C / PRS 101 / PAO1), this protein is Esterase TesA (tesA).